A 1349-amino-acid polypeptide reads, in one-letter code: MFFILLITLPSVFAVIGDLKCNTSSINDVDTGVPSISSEVVDVTNGLGTFYVLDRVYLNTTLLLNGYYPISGATFRNVALKGTRLLSTLWFKPPFLSPFNDGIFAKVKNSRFSKHGVIYSEFPAITIGSTFVNTSYSIVVKPHTSFINGNLQGFLQISVCQYTMCEYPQTICHPNLGNQRIELWHHDTDVVSCLYRRNFTYDVNADYLYFHFYQEGGTFYAYFTDTGFVTKFLFKLYLGTVLSHYYVMPLTCDSALSLEYWVTPLTTRQFLLAFDQDGVLYHAVDCASDFMSEIMCKTSSITPPTGVYELNGYTVQPVATVYRRIPDLPNCDIEAWLNSKTVSSPLNWERKIFSNCNFNMGRLMSFIQADSFGCNNIDASRLYGMCFGSITIDKFAIPNSRKVDLQVGKSGYLQSFNYKIDTAVSSCQLYYSLPAANVSVTHYNPSSWNRRYGFINQSFGSRGLHDAVYSQQCFNTPNTYCPCRTSQCIGGAGTGTCPVGTTVRKCFAAVTNATKCTCWCQPDPSTYKGVNAWTCPQSKVSIQPGQHCPGLGLVEDDCSGNPCTCKPQAFIGWSSETCLQNGRCNIFANFILNDVNSGTTCSTDLQQGNTNITTDVCVNYDLYGITGQGILIEVNATYYNSWQNLLYDSSGNLYGFRDYLSNRTFLIRSCYSGRVSAVFHANSSEPALMFRNLKCSHVFNYTILRQIQLVNYFDSYLGCVVNAYNNTASAVSTCDLTVGSGYCVDYVTALRSRRSFTTGYRFTNFEPFAANLVNDSIEPVGGLYEIQIPSEFTIGNLEEFIQTSSPKVTIDCATFVCGDYAACRQQLAEYGSFCENINAILIEVNELLDTTQLQVANSLMNGVTLSTKIKDGINFNVDDINFSSVLGCLGSECNRASTRSAIEDLLFDKVKLSDVGFVQAYNNCTGGAEIRDLICVQSYNGIKVLPPLLSENQISGYTSAATAASLFPPWTAAAGVPFYLNVQYRINGLGVTMDVLSQNQKLIASAFNNALDSIQEGFDATNSALVKIQAVVNANAEALNNLLQQLSNRFGAISASLQEILSRLDALEAKAQIDRLINGRLTALNAYVSQQLSDSTLVKFSAAQAIEKVNECVKSQSSRINFCGNGNHIISLVQNAPYGLYFIHFSYVPTKYVTAKVSPGLCIAGDIGISPKSGYFINVNNSWMFTGSGYYYPEPITQNNVVVMSTCAVNYTKAPDLMLNTSTPNLPDFKEELYQWFKNQSSLAPDLSFDYINVTFLDLQDEMNRLQEAIKVLNHSYINLKDIGTYEYYVKWPWYVWLLICLAGVVMLVLLFFICCCTGCGTSCFKKCGGCFDDYTGHQEFVIKTSHDD.

Residues Met1–Phe13 form the signal peptide. Over Ala14–Pro1293 the chain is Extracellular. The 284-residue stretch at Val15–Thr298 folds into the BetaCoV S1-NTD domain. 7 cysteine pairs are disulfide-bonded: Cys21/Cys165, Cys160/Cys193, Cys172/Cys252, Cys286/Cys296, Cys331/Cys356, Cys374/Cys427, and Cys386/Cys601. Residues Asn22, Asn59, and Asn133 are each glycosylated (N-linked (GlcNAc...) asparagine; by host). Asn198 carries an N-linked (GlcNAc...) asparagine; by host glycan. One can recognise a BetaCoV S1-CTD domain in the interval Pro329–Thr603. Asn437, Asn456, Asn512, Asn611, Asn635, Asn662, Asn682, Asn700, Asn725, Asn774, and Asn881 each carry an N-linked (GlcNAc...) asparagine; by host glycan. 2 fusion peptide regions span residues Ser900 to Tyr921 and Gln919 to Tyr939. Asn923 carries an N-linked (GlcNAc...) asparagine; by host glycan. A disulfide bridge links Cys924 with Cys935. Residues Gln1000 to Phe1050 form a heptad repeat 1 region. Residues Gln1029–Ile1073 adopt a coiled-coil conformation. N-linked (GlcNAc...) asparagine; by host glycosylation is found at Asn1180, Asn1210, Asn1220, Asn1239, Asn1253, and Asn1274. Residues Ala1244 to Asp1282 are heptad repeat 2. Positions Thr1255–Ile1283 form a coiled coil. Residues Trp1294–Ile1314 form a helical membrane-spanning segment. Over Cys1315–Asp1349 the chain is Cytoplasmic. A KxHxx motif is present at residues Thr1345–Asp1349.

The protein belongs to the betacoronaviruses spike protein family. In terms of assembly, homotrimer; each monomer consists of a S1 and a S2 subunit. The resulting peplomers protrude from the virus surface as spikes. Post-translationally, specific enzymatic cleavages in vivo yield mature proteins. The precursor is processed into S1 and S2 by host cell furin or another cellular protease to yield the mature S1 and S2 proteins. Additionally, a second cleavage leads to the release of a fusion peptide after viral attachment to host cell receptor. The cytoplasmic Cys-rich domain is palmitoylated. Spike glycoprotein is digested within host endosomes.

It is found in the virion membrane. The protein localises to the host endoplasmic reticulum-Golgi intermediate compartment membrane. The protein resides in the host cell membrane. Its function is as follows. Attaches the virion to the cell membrane by interacting with host receptor, initiating the infection. Functionally, mediates fusion of the virion and cellular membranes by acting as a class I viral fusion protein. Under the current model, the protein has at least three conformational states: pre-fusion native state, pre-hairpin intermediate state, and post-fusion hairpin state. During viral and target cell membrane fusion, the coiled coil regions (heptad repeats) assume a trimer-of-hairpins structure, positioning the fusion peptide in close proximity to the C-terminal region of the ectodomain. The formation of this structure appears to drive apposition and subsequent fusion of viral and target cell membranes. In terms of biological role, acts as a viral fusion peptide which is unmasked following S2 cleavage occurring upon virus endocytosis. This Porcine hemagglutinating encephalomyelitis virus (strain IAF-404) (HEV) protein is Spike glycoprotein.